We begin with the raw amino-acid sequence, 153 residues long: uncharacterized protein (153 aa).

Transmembrane regions (helical) follow at residues 1–21 (MAATPAAIEVSLTIVFVLFFS) and 106–126 (IVPIPFYCISKAQECFLTVYI).

Its subcellular location is the membrane. This is an uncharacterized protein from Saccharomyces cerevisiae (strain ATCC 204508 / S288c) (Baker's yeast).